The primary structure comprises 206 residues: Transcription elongation factor A protein-like 5 (206 aa).

Residues 1 to 26 (MEKLYKENEGKPENERNLESEGKPED) show a composition bias toward basic and acidic residues. Residues 1-206 (MEKLYKENEG…QKDLEDVPYV (206 aa)) form a disordered region. The span at 27-42 (EGSTEDEGKSDEEEKP) shows a compositional bias: acidic residues. Residues 43-56 (DMEGKTECEGKRED) show a composition bias toward basic and acidic residues. Residues 57–70 (EGEPGDEGQLEDEG) show a composition bias toward acidic residues. Basic and acidic residues-rich tracts occupy residues 71–86 (NQEK…KPQS), 102–113 (AAEKRPAEDYVP), 121–160 (DRGT…EELR), and 196–206 (GQKDLEDVPYV).

The protein belongs to the TFS-II family. TFA subfamily.

It localises to the nucleus. Functionally, may be involved in transcriptional regulation. This is Transcription elongation factor A protein-like 5 (TCEAL5) from Homo sapiens (Human).